The following is a 317-amino-acid chain: Probable RuBisCO transcriptional regulator (317 aa).

An HTH lysR-type domain is found at 6 to 63 (FTLDQLRILRAILIQGSFKKAATSLYISQPAVSSHVHNIEKQLNIQLFDRSHRNAQLT). The segment at residues 23 to 42 (FKKAATSLYISQPAVSSHVH) is a DNA-binding region (H-T-H motif).

Belongs to the LysR transcriptional regulatory family.

It is found in the plastid. The protein resides in the chloroplast. In terms of biological role, trans-acting transcriptional regulator of RuBisCO genes (rbcL and rbcS) expression. The polypeptide is Probable RuBisCO transcriptional regulator (rbcR) (Cyanidium caldarium (Red alga)).